Consider the following 107-residue polypeptide: uncharacterized protein (107 aa).

The segment covering 80-98 (SIDNLKPTSHQNGTTNDTA) has biased composition (polar residues). The interval 80 to 107 (SIDNLKPTSHQNGTTNDTATMDHLEKNE) is disordered.

This is an uncharacterized protein from Human spumaretrovirus (SFVcpz(hu)).